Reading from the N-terminus, the 212-residue chain is Large ribosomal subunit protein uL3 (212 aa).

Residue Gln153 is modified to N5-methylglutamine.

It belongs to the universal ribosomal protein uL3 family. Part of the 50S ribosomal subunit. Forms a cluster with proteins L14 and L19. In terms of processing, methylated by PrmB.

Functionally, one of the primary rRNA binding proteins, it binds directly near the 3'-end of the 23S rRNA, where it nucleates assembly of the 50S subunit. The protein is Large ribosomal subunit protein uL3 of Shewanella loihica (strain ATCC BAA-1088 / PV-4).